The following is a 294-amino-acid chain: Diaminopimelate epimerase (294 aa).

Substrate is bound by residues N15, Q47, and N67. Catalysis depends on C76, which acts as the Proton donor. Substrate contacts are provided by residues G77–N78, N163, N197, and E215–R216. C224 (proton acceptor) is an active-site residue. G225–S226 serves as a coordination point for substrate.

This sequence belongs to the diaminopimelate epimerase family. As to quaternary structure, homodimer.

Its subcellular location is the cytoplasm. The catalysed reaction is (2S,6S)-2,6-diaminopimelate = meso-2,6-diaminopimelate. It functions in the pathway amino-acid biosynthesis; L-lysine biosynthesis via DAP pathway; DL-2,6-diaminopimelate from LL-2,6-diaminopimelate: step 1/1. In terms of biological role, catalyzes the stereoinversion of LL-2,6-diaminopimelate (L,L-DAP) to meso-diaminopimelate (meso-DAP), a precursor of L-lysine and an essential component of the bacterial peptidoglycan. The polypeptide is Diaminopimelate epimerase (Mesorhizobium japonicum (strain LMG 29417 / CECT 9101 / MAFF 303099) (Mesorhizobium loti (strain MAFF 303099))).